Reading from the N-terminus, the 645-residue chain is 1-deoxy-D-xylulose-5-phosphate synthase (645 aa).

Thiamine diphosphate-binding positions include His79 and 120–122 (AHS). Asp155 contacts Mg(2+). Residues 156-157 (GA), Asn184, Tyr293, and Glu375 contribute to the thiamine diphosphate site. Asn184 contacts Mg(2+).

This sequence belongs to the transketolase family. DXPS subfamily. Homodimer. Requires Mg(2+) as cofactor. It depends on thiamine diphosphate as a cofactor.

The enzyme catalyses D-glyceraldehyde 3-phosphate + pyruvate + H(+) = 1-deoxy-D-xylulose 5-phosphate + CO2. It participates in metabolic intermediate biosynthesis; 1-deoxy-D-xylulose 5-phosphate biosynthesis; 1-deoxy-D-xylulose 5-phosphate from D-glyceraldehyde 3-phosphate and pyruvate: step 1/1. Its function is as follows. Catalyzes the acyloin condensation reaction between C atoms 2 and 3 of pyruvate and glyceraldehyde 3-phosphate to yield 1-deoxy-D-xylulose-5-phosphate (DXP). This Ruegeria sp. (strain TM1040) (Silicibacter sp.) protein is 1-deoxy-D-xylulose-5-phosphate synthase.